The sequence spans 267 residues: Ribosomal RNA large subunit methyltransferase E (267 aa).

The S-adenosyl-L-methionine site is built by glycine 50, tryptophan 52, aspartate 68, aspartate 84, and aspartate 109. Lysine 149 functions as the Proton acceptor in the catalytic mechanism. Residues 196-255 (PLKIDDKFDVTIKKIGAKGNGIAFVEDFVVFMQDEVKKGENVRIKIVDVKPEFAFAIVIG) form the TRAM domain.

The protein belongs to the class I-like SAM-binding methyltransferase superfamily. RNA methyltransferase RlmE family.

The protein resides in the cytoplasm. It catalyses the reaction uridine(2552) in 23S rRNA + S-adenosyl-L-methionine = 2'-O-methyluridine(2552) in 23S rRNA + S-adenosyl-L-homocysteine + H(+). Specifically methylates the uridine in position 2552 of 23S rRNA at the 2'-O position of the ribose in the fully assembled 50S ribosomal subunit. In Methanococcoides burtonii (strain DSM 6242 / NBRC 107633 / OCM 468 / ACE-M), this protein is Ribosomal RNA large subunit methyltransferase E.